The primary structure comprises 1129 residues: Eukaryotic translation initiation factor 3 subunit A (1129 aa).

Positions 319-502 (LQRMAAHVLL…NSIYFGTDLT (184 aa)) constitute a PCI domain. 2 disordered regions span residues 590-633 (NNAR…NEIQ) and 836-1129 (AAEA…VKRR). Composition is skewed to basic and acidic residues over residues 836-903 (AAEA…RSER), 923-964 (DRND…KDTD), 971-985 (WRVR…RERG), 994-1044 (GRDD…DQPQ), and 1053-1076 (DSPR…RDIR). Residues 1080–1091 (PKEGGGGGGGGN) are compositionally biased toward gly residues. Residues 1098-1119 (PRDEKPPVKRDQPQDKENKAGD) show a composition bias toward basic and acidic residues.

This sequence belongs to the eIF-3 subunit A family. Component of the eukaryotic translation initiation factor 3 (eIF-3) complex. The eIF-3 complex interacts with pix.

The protein resides in the cytoplasm. Functionally, RNA-binding component of the eukaryotic translation initiation factor 3 (eIF-3) complex, which is involved in protein synthesis of a specialized repertoire of mRNAs and, together with other initiation factors, stimulates binding of mRNA and methionyl-tRNAi to the 40S ribosome. The eIF-3 complex specifically targets and initiates translation of a subset of mRNAs involved in cell proliferation. This is Eukaryotic translation initiation factor 3 subunit A from Drosophila mojavensis (Fruit fly).